The sequence spans 513 residues: 2,3-bisphosphoglycerate-independent phosphoglycerate mutase (513 aa).

Asp-12 and Ser-62 together coordinate Mn(2+). Ser-62 acts as the Phosphoserine intermediate in catalysis. Substrate-binding positions include His-123, 153-154, Arg-185, Arg-191, 261-264, and Lys-335; these read RD and RSDR. Mn(2+)-binding residues include Asp-402, His-406, Asp-443, His-444, and His-462.

It belongs to the BPG-independent phosphoglycerate mutase family. As to quaternary structure, monomer. The cofactor is Mn(2+).

It catalyses the reaction (2R)-2-phosphoglycerate = (2R)-3-phosphoglycerate. The protein operates within carbohydrate degradation; glycolysis; pyruvate from D-glyceraldehyde 3-phosphate: step 3/5. Catalyzes the interconversion of 2-phosphoglycerate and 3-phosphoglycerate. This is 2,3-bisphosphoglycerate-independent phosphoglycerate mutase from Thiobacillus denitrificans (strain ATCC 25259 / T1).